Reading from the N-terminus, the 329-residue chain is Beta-ketoacyl-[acyl-carrier-protein] synthase III (329 aa).

Residues Cys113 and His255 contribute to the active site. The tract at residues Gln256–Arg260 is ACP-binding. Asn285 is a catalytic residue.

The protein belongs to the thiolase-like superfamily. FabH family. As to quaternary structure, homodimer.

The protein localises to the cytoplasm. It carries out the reaction malonyl-[ACP] + acetyl-CoA + H(+) = 3-oxobutanoyl-[ACP] + CO2 + CoA. It functions in the pathway lipid metabolism; fatty acid biosynthesis. Catalyzes the condensation reaction of fatty acid synthesis by the addition to an acyl acceptor of two carbons from malonyl-ACP. Catalyzes the first condensation reaction which initiates fatty acid synthesis and may therefore play a role in governing the total rate of fatty acid production. Possesses both acetoacetyl-ACP synthase and acetyl transacylase activities. Its substrate specificity determines the biosynthesis of branched-chain and/or straight-chain of fatty acids. The polypeptide is Beta-ketoacyl-[acyl-carrier-protein] synthase III (Chlorobium phaeobacteroides (strain DSM 266 / SMG 266 / 2430)).